A 210-amino-acid chain; its full sequence is N-(5'-phosphoribosyl)anthranilate isomerase (210 aa).

Belongs to the TrpF family.

It catalyses the reaction N-(5-phospho-beta-D-ribosyl)anthranilate = 1-(2-carboxyphenylamino)-1-deoxy-D-ribulose 5-phosphate. It functions in the pathway amino-acid biosynthesis; L-tryptophan biosynthesis; L-tryptophan from chorismate: step 3/5. The chain is N-(5'-phosphoribosyl)anthranilate isomerase from Nostoc punctiforme (strain ATCC 29133 / PCC 73102).